A 632-amino-acid chain; its full sequence is Biosynthetic arginine decarboxylase (632 aa).

K101 bears the N6-(pyridoxal phosphate)lysine mark. F281 to Y291 is a substrate binding site.

This sequence belongs to the Orn/Lys/Arg decarboxylase class-II family. SpeA subfamily. Requires Mg(2+) as cofactor. Pyridoxal 5'-phosphate is required as a cofactor.

The catalysed reaction is L-arginine + H(+) = agmatine + CO2. The protein operates within amine and polyamine biosynthesis; agmatine biosynthesis; agmatine from L-arginine: step 1/1. Catalyzes the biosynthesis of agmatine from arginine. This is Biosynthetic arginine decarboxylase from Escherichia coli O157:H7 (strain EC4115 / EHEC).